The sequence spans 269 residues: Phosphatidylglycerophosphate phosphatase 1, chloroplastic (269 aa).

Residues 1–33 (MRSVPGPSPPCTRSLAHSCRAAARGPCGSARPR) constitute a chloroplast transit peptide. The segment at 25-46 (GPCGSARPRARSVSARAHSSEA) is disordered. Residues 29 to 46 (SARPRARSVSARAHSSEA) are compositionally biased toward low complexity. The short motif at 103 to 107 (DKDNT) is the Phosphoryl acceptor element.

This sequence belongs to the HAD-like hydrolase superfamily.

It is found in the plastid. The protein localises to the chloroplast. The catalysed reaction is a 1,2-diacyl-sn-glycero-3-phospho-(1'-sn-glycero-3'-phosphate) + H2O = a 1,2-diacyl-sn-glycero-3-phospho-(1'-sn-glycerol) + phosphate. It functions in the pathway phospholipid metabolism; phosphatidylglycerol biosynthesis; phosphatidylglycerol from CDP-diacylglycerol: step 2/2. Its function is as follows. Phosphatidylglycerophosphate phosphatase involved in the biosynthesis of phosphatidylglycerol (PG), a phosphoglycerolipid predominantly present in chloroplastic thylakoid membranes and which has important photosynthetic function. Required for thylakoid membranes development and chloroplast function. The polypeptide is Phosphatidylglycerophosphate phosphatase 1, chloroplastic (Chlamydomonas reinhardtii (Chlamydomonas smithii)).